A 464-amino-acid polypeptide reads, in one-letter code: Tyrosine--tRNA ligase, mitochondrial (464 aa).

An L-tyrosine-binding site is contributed by Y61. D65 is an ATP binding site. The short motif at 66–75 is the 'HIGH' region element; that stretch reads PTADSLHVGN. L-tyrosine contacts are provided by D105, Y209, Q213, D216, and Q235. A 'KMSKS' region motif is present at residues 270–274; that stretch reads KFGKS. Residue K273 participates in ATP binding.

Belongs to the class-I aminoacyl-tRNA synthetase family. In terms of assembly, homodimer.

Its subcellular location is the mitochondrion matrix. The enzyme catalyses tRNA(Tyr) + L-tyrosine + ATP = L-tyrosyl-tRNA(Tyr) + AMP + diphosphate + H(+). Catalyzes the attachment of tyrosine to tRNA(Tyr) in a two-step reaction: tyrosine is first activated by ATP to form Tyr-AMP and then transferred to the acceptor end of tRNA(Tyr). This Drosophila melanogaster (Fruit fly) protein is Tyrosine--tRNA ligase, mitochondrial.